The following is a 99-amino-acid chain: Aspartyl/glutamyl-tRNA(Asn/Gln) amidotransferase subunit C (99 aa).

This sequence belongs to the GatC family. As to quaternary structure, heterotrimer of A, B and C subunits.

The enzyme catalyses L-glutamyl-tRNA(Gln) + L-glutamine + ATP + H2O = L-glutaminyl-tRNA(Gln) + L-glutamate + ADP + phosphate + H(+). It catalyses the reaction L-aspartyl-tRNA(Asn) + L-glutamine + ATP + H2O = L-asparaginyl-tRNA(Asn) + L-glutamate + ADP + phosphate + 2 H(+). In terms of biological role, allows the formation of correctly charged Asn-tRNA(Asn) or Gln-tRNA(Gln) through the transamidation of misacylated Asp-tRNA(Asn) or Glu-tRNA(Gln) in organisms which lack either or both of asparaginyl-tRNA or glutaminyl-tRNA synthetases. The reaction takes place in the presence of glutamine and ATP through an activated phospho-Asp-tRNA(Asn) or phospho-Glu-tRNA(Gln). This is Aspartyl/glutamyl-tRNA(Asn/Gln) amidotransferase subunit C from Mycolicibacterium smegmatis (strain ATCC 700084 / mc(2)155) (Mycobacterium smegmatis).